A 557-amino-acid chain; its full sequence is MRSDMIKKGFDKAPHRSLLKATGLKDEDFHKPFVAICNSFIEIIPGHKHLNEFGRLVKEAVRAAGMVPFEFNTIGVDDGIAMGHIGMRYSLPSREIIADSVETVVNAHWFDGMICIPNCDKITPGMMMAAMRINIPTVFVSGGPMAAGKTSKGEVVDLSSVFEGVGAYQSGKISEEELKDIEDHGCPSCGSCSGMFTANSMNCLCEVLGLALPGNGSILATDSRREQLIQRAAESLKILMERDIKPRDIVTEEAIDDAFALDMAMGGSTNTVLHTLAIAQEAGLDYDMNRIDAVSRKVPHLCKVSPASNWHMEDIDRAGGMSAILKELSRKEGVLHFDRITVTGKTLRENIADAEIQDKEVIHSLENPHSQEGGLRILKGNLAKDGAVIKSGATEVKRFEGPCVIFNSQDEALAGIMLGKVKKGDVVVIRYEGPRGGPGMPEMLAPTSAIAGMGLGADVALLTDGRFSGASRGISVGHISPEAAAGGEIALLQQGDIVCIDVEERLLEVKVSDEELAKRRKEWKRPEPKVKTGWLGRYAQMVTSANTGAVLKMQNFD.

D78 is a binding site for Mg(2+). Residue C119 participates in [2Fe-2S] cluster binding. Mg(2+)-binding residues include D120 and K121. K121 is subject to N6-carboxylysine. A [2Fe-2S] cluster-binding site is contributed by C192. A Mg(2+)-binding site is contributed by E442. S468 (proton acceptor) is an active-site residue.

The protein belongs to the IlvD/Edd family. Homodimer. It depends on [2Fe-2S] cluster as a cofactor. The cofactor is Mg(2+).

The catalysed reaction is (2R)-2,3-dihydroxy-3-methylbutanoate = 3-methyl-2-oxobutanoate + H2O. It catalyses the reaction (2R,3R)-2,3-dihydroxy-3-methylpentanoate = (S)-3-methyl-2-oxopentanoate + H2O. The protein operates within amino-acid biosynthesis; L-isoleucine biosynthesis; L-isoleucine from 2-oxobutanoate: step 3/4. Its pathway is amino-acid biosynthesis; L-valine biosynthesis; L-valine from pyruvate: step 3/4. In terms of biological role, functions in the biosynthesis of branched-chain amino acids. Catalyzes the dehydration of (2R,3R)-2,3-dihydroxy-3-methylpentanoate (2,3-dihydroxy-3-methylvalerate) into 2-oxo-3-methylpentanoate (2-oxo-3-methylvalerate) and of (2R)-2,3-dihydroxy-3-methylbutanoate (2,3-dihydroxyisovalerate) into 2-oxo-3-methylbutanoate (2-oxoisovalerate), the penultimate precursor to L-isoleucine and L-valine, respectively. This is Dihydroxy-acid dehydratase from Bacillus cytotoxicus (strain DSM 22905 / CIP 110041 / 391-98 / NVH 391-98).